The chain runs to 173 residues: Co-chaperone protein HscB homolog (173 aa).

Residues 5–77 (CHFALFDLQP…PRRARYLLAI (73 aa)) enclose the J domain.

The protein belongs to the HscB family. Interacts with HscA and stimulates its ATPase activity.

Its function is as follows. Co-chaperone involved in the maturation of iron-sulfur cluster-containing proteins. Seems to help targeting proteins to be folded toward HscA. The protein is Co-chaperone protein HscB homolog of Pseudomonas putida (strain W619).